Consider the following 442-residue polypeptide: Mirror-image polydactyly gene 1 protein (442 aa).

The disordered stretch occupies residues 1–39 (MENWSKDITHSYLEQETTGINKSTQPDEQLTMNSEKSMH). Residues 12-35 (YLEQETTGINKSTQPDEQLTMNSE) are compositionally biased toward polar residues. Coiled coils occupy residues 107–212 (SDKE…LENI) and 253–435 (ECKM…KVGT).

Expressed very weakly in heart, liver, skeletal muscle, kidney, pancreas and fetal kidney. Not detected in brain, placenta and lung.

In Homo sapiens (Human), this protein is Mirror-image polydactyly gene 1 protein (MIPOL1).